The primary structure comprises 415 residues: Alpha-1,3/1,6-mannosyltransferase ALG2 (415 aa).

Over 1-84 (MAENLYRARS…LPRSLGWGGR (84 aa)) the chain is Cytoplasmic. An intramembrane region (helical) is located at residues 85-105 (GAAICSYVRMVFLALYVLFLS). At 106–415 (GEEFDVVVCD…QLYQYVTKLV (310 aa)) the chain is on the cytoplasmic side.

Belongs to the glycosyltransferase group 1 family. Glycosyltransferase 4 subfamily.

The protein localises to the endoplasmic reticulum membrane. It carries out the reaction a beta-D-Man-(1-&gt;4)-beta-D-GlcNAc-(1-&gt;4)-alpha-D-GlcNAc-diphospho-di-trans,poly-cis-dolichol + GDP-alpha-D-mannose = an alpha-D-Man-(1-&gt;3)-beta-D-Man-(1-&gt;4)-beta-D-GlcNAc-(1-&gt;4)-alpha-D-GlcNAc-diphospho-di-trans,poly-cis-dolichol + GDP + H(+). The enzyme catalyses an alpha-D-Man-(1-&gt;3)-beta-D-Man-(1-&gt;4)-beta-D-GlcNAc-(1-&gt;4)-alpha-D-GlcNAc-diphospho-di-trans,poly-cis-dolichol + GDP-alpha-D-mannose = an alpha-D-Man-(1-&gt;3)-[alpha-D-Man-(1-&gt;6)]-beta-D-Man-(1-&gt;4)-beta-D-GlcNAc-(1-&gt;4)-alpha-D-GlcNAc-diphospho-di-trans,poly-cis-dolichol + GDP + H(+). It catalyses the reaction a beta-D-Man-(1-&gt;4)-beta-D-GlcNAc-(1-&gt;4)-alpha-D-GlcNAc-diphospho-di-trans,poly-cis-dolichol + GDP-alpha-D-mannose = an alpha-D-Man-(1-&gt;6)-beta-D-Man-(1-&gt;4)-beta-D-GlcNAc-(1-&gt;4)-alpha-D-GlcNAc-diphospho-di-trans,poly-cis-dolichol + GDP + H(+). The catalysed reaction is an alpha-D-Man-(1-&gt;6)-beta-D-Man-(1-&gt;4)-beta-D-GlcNAc-(1-&gt;4)-alpha-D-GlcNAc-diphospho-di-trans,poly-cis-dolichol + GDP-alpha-D-mannose = an alpha-D-Man-(1-&gt;3)-[alpha-D-Man-(1-&gt;6)]-beta-D-Man-(1-&gt;4)-beta-D-GlcNAc-(1-&gt;4)-alpha-D-GlcNAc-diphospho-di-trans,poly-cis-dolichol + GDP + H(+). Its pathway is protein modification; protein glycosylation. Its function is as follows. Mannosyltransferase that operates in the biosynthetic pathway of dolichol-linked oligosaccharides, the glycan precursors employed in protein asparagine (N)-glycosylation. The assembly of dolichol-linked oligosaccharides begins on the cytosolic side of the endoplasmic reticulum membrane and finishes in its lumen. The sequential addition of sugars to dolichol pyrophosphate produces dolichol-linked oligosaccharides containing fourteen sugars, including two GlcNAcs, nine mannoses and three glucoses. Once assembled, the oligosaccharide is transferred from the lipid to nascent proteins by oligosaccharyltransferases. Catalyzes, on the cytoplasmic face of the endoplasmic reticulum, the addition of the second and third mannose residues to the dolichol-linked oligosaccharide chain, to produce Man3GlcNAc(2)-PP-dolichol core oligosaccharide. Man3GlcNAc(2)-PP-dolichol is a substrate for ALG11, the following enzyme in the biosynthetic pathway. While both alpha 1,3 and alpha 1,6 linkages are possible, the sequential addition of alpha 1,3 followed by alpha 1,6 is probably the preferred route. The protein is Alpha-1,3/1,6-mannosyltransferase ALG2 (Alg2) of Mus musculus (Mouse).